Consider the following 752-residue polypeptide: Phosphatidylinositol 4-phosphate 5-kinase 1 (752 aa).

7 MORN repeats span residues Y81–M103, Y104–T126, Y127–T149, Y150–F172, Y173–Q195, Y196–R218, and Y219–S241. Positions S349–F748 constitute a PIPK domain. The segment at Y708–S729 is activation loop.

Post-translationally, phosphorylation inactivates the enzyme. In terms of tissue distribution, expressed in the whole plant, preferentially in roots. Strongly expressed in meristematic tissues, namely procambial cell layers.

The enzyme catalyses a 1,2-diacyl-sn-glycero-3-phospho-(1D-myo-inositol 4-phosphate) + ATP = a 1,2-diacyl-sn-glycero-3-phospho-(1D-myo-inositol-4,5-bisphosphate) + ADP + H(+). In terms of biological role, catalyzes the synthesis of phosphatidylinositol 4,5-bisphosphate and phosphatidylinositol 3,4-bisphosphate. The chain is Phosphatidylinositol 4-phosphate 5-kinase 1 (PIP5K1) from Arabidopsis thaliana (Mouse-ear cress).